The following is a 1048-amino-acid chain: Pleckstrin homology domain-containing family A member 6 (1048 aa).

Residues 1–22 show a composition bias toward polar residues; that stretch reads MSNKTGGKRPATTNSDIPNHNM. The disordered stretch occupies residues 1-36; that stretch reads MSNKTGGKRPATTNSDIPNHNMVSEVPPERPSVRAT. The 100-residue stretch at 59–158 folds into the PH domain; it reads PVTKAGWLFK…WIQAMGEAAR (100 aa). Disordered stretches follow at residues 165-318 and 448-467; these read QKSV…MNQL and SLQPRSHSVPRSPSQGSYSR. Over residues 201 to 233 the composition is skewed to basic and acidic residues; it reads PEPEAKTRGEGDGRGCEKAERRPERPEVKKEPP. A phosphoserine mark is found at S247 and S251. The span at 267 to 290 shows a compositional bias: polar residues; sequence AQPNGWQYHSPSRPGSTAFPSQDG. A phosphoserine mark is found at S314, S459, S461, and S472. Residues 456–465 show a composition bias toward polar residues; that stretch reads VPRSPSQGSY. Y492 is subject to Phosphotyrosine. S591 is modified (phosphoserine). A disordered region spans residues 663 to 746; that stretch reads RKNNPSRGTD…HQTLPLDTPR (84 aa). Over residues 687 to 711 the composition is skewed to low complexity; it reads SSNSPASPLSSASLTSPLSPFSLVS. Polar residues predominate over residues 712-721; the sequence is GSQGSPTKPG. Phosphothreonine is present on T744. S777 carries the post-translational modification Phosphoserine. T784 is subject to Phosphothreonine. The segment at 793 to 858 is disordered; that stretch reads ASGLTNGLSS…PAPDPSPRPA (66 aa). Residues 794-803 show a composition bias toward polar residues; sequence SGLTNGLSSQ. The residue at position 801 (S801) is a Phosphoserine. The span at 815-827 shows a compositional bias: basic and acidic residues; the sequence is GKVKMSVEEQIDR. Over residues 828-842 the composition is skewed to basic residues; the sequence is MRRHQSGSMREKRRS. Phosphoserine occurs at positions 848, 854, and 867. Position 920 is a phosphothreonine (T920). At S940 the chain carries Phosphoserine. 2 disordered regions span residues 968 to 989 and 1005 to 1048; these read PIGEGDSVDVPQDSESQLQEQE and RGRM…TMRV. Residue T1015 is modified to Phosphothreonine. The span at 1016–1030 shows a compositional bias: pro residues; the sequence is PSPPTSPASPAPPAN. Residue S1017 is modified to Phosphoserine. T1020 is subject to Phosphothreonine. Phosphoserine is present on residues S1021 and S1024.

Highly expressed in heart, kidney and throughout the brain.

This chain is Pleckstrin homology domain-containing family A member 6 (PLEKHA6), found in Homo sapiens (Human).